A 1362-amino-acid chain; its full sequence is Integrator complex subunit 2 homolog (1362 aa).

A compositionally biased stretch (low complexity) spans methionine 1–asparagine 10. 3 disordered regions span residues methionine 1–serine 20, threonine 629–asparagine 660, and asparagine 928–glutamate 963. Residues aspartate 945 to glutamate 955 are compositionally biased toward basic and acidic residues.

It belongs to the Integrator subunit 2 family. Component of the Integrator complex. The core complex associates with protein phosphatase 2A subunits, to form the Integrator-PP2A (INTAC) complex.

It is found in the nucleus. Its subcellular location is the cytoplasm. Its function is as follows. Component of the integrator complex, a multiprotein complex that terminates RNA polymerase II (Pol II) transcription in the promoter-proximal region of genes. The integrator complex provides a quality checkpoint during transcription elongation by driving premature transcription termination of transcripts that are unfavorably configured for transcriptional elongation: the complex terminates transcription by (1) catalyzing dephosphorylation of the C-terminal domain (CTD) of Pol II subunit polr2a, (2) degrading the exiting nascent RNA transcript via endonuclease activity and (3) promoting the release of Pol II from bound DNA. The integrator complex is also involved in terminating the synthesis of non-coding Pol II transcripts, such as enhancer RNAs (eRNAs), small nuclear RNAs (snRNAs), telomerase RNAs and long non-coding RNAs (lncRNAs). The chain is Integrator complex subunit 2 homolog (ints2) from Dictyostelium discoideum (Social amoeba).